Here is a 284-residue protein sequence, read N- to C-terminus: Agamous-like MADS-box protein AGL49 (284 aa).

The interval 1–20 (MAPRQKKPNKSDDDDGDLHR) is disordered. The region spanning 21 to 66 (KKQSFFKQRFPGFKKKASELSVLCGNSVGFICYGPDNDLHVWPQSQ) is the MADS-box domain.

In terms of assembly, interacts with MEE14/CBP1.

It localises to the nucleus. Functionally, probable transcription factor that may function in the maintenance of the proper function of the central cell in pollen tube attraction. This is Agamous-like MADS-box protein AGL49 from Arabidopsis thaliana (Mouse-ear cress).